Here is a 126-residue protein sequence, read N- to C-terminus: Follitropin subunit beta (126 aa).

The N-terminal stretch at 1–19 (MKLIQLCILFWCWRAICCQ) is a signal peptide. Cystine bridges form between C21–C69, C35–C84, C38–C122, C46–C100, C50–C102, and C105–C112. N-linked (GlcNAc...) asparagine glycans are attached at residues N25 and N42.

Belongs to the glycoprotein hormones subunit beta family. In terms of assembly, heterodimer. The active follitropin is a heterodimer composed of an alpha chain/CGA shared with other hormones and a unique beta chain/FSHB shown here.

The protein resides in the secreted. Its function is as follows. Together with the alpha chain CGA constitutes follitropin, the follicle-stimulating hormone, and provides its biological specificity to the hormone heterodimer. Binds FSHR, a G protein-coupled receptor, on target cells to activate downstream signaling pathways. Follitropin is involved in follicle development and spermatogenesis in reproductive organs. The protein is Follitropin subunit beta (FSHB) of Phodopus sungorus (Striped hairy-footed hamster).